The following is a 367-amino-acid chain: Quinolinate synthase (367 aa).

His45 and Ser62 together coordinate iminosuccinate. [4Fe-4S] cluster is bound at residue Cys109. Residues 140 to 142 and Ser161 contribute to the iminosuccinate site; that span reads YVN. Cys229 contacts [4Fe-4S] cluster. Residues 255 to 257 and Thr272 contribute to the iminosuccinate site; that span reads HPE. Cys319 contributes to the [4Fe-4S] cluster binding site.

This sequence belongs to the quinolinate synthase family. Type 3 subfamily. It depends on [4Fe-4S] cluster as a cofactor.

The protein resides in the cytoplasm. It carries out the reaction iminosuccinate + dihydroxyacetone phosphate = quinolinate + phosphate + 2 H2O + H(+). It participates in cofactor biosynthesis; NAD(+) biosynthesis; quinolinate from iminoaspartate: step 1/1. Catalyzes the condensation of iminoaspartate with dihydroxyacetone phosphate to form quinolinate. The protein is Quinolinate synthase of Halalkalibacterium halodurans (strain ATCC BAA-125 / DSM 18197 / FERM 7344 / JCM 9153 / C-125) (Bacillus halodurans).